The sequence spans 379 residues: Heme A synthase (379 aa).

Residues 1–28 (MAGSRSIFEEVQDSQKPAAMPGGVSRDR) are disordered. The next 8 membrane-spanning stretches (helical) occupy residues 35 to 55 (VRVF…IGGL), 124 to 144 (FLGV…SVPV), 150 to 170 (LLLL…MVHS), 183 to 203 (RLAV…WYIL), 227 to 247 (ATGL…VAGI), 287 to 307 (FFHR…WIMA), 318 to 338 (AFDW…MTVM), and 341 to 361 (SPWY…TLIL). His289 contributes to the heme binding site. A heme-binding site is contributed by His349.

The protein belongs to the COX15/CtaA family. Type 2 subfamily. Interacts with CtaB. It depends on heme b as a cofactor.

The protein localises to the cell membrane. The catalysed reaction is Fe(II)-heme o + 2 A + H2O = Fe(II)-heme a + 2 AH2. The protein operates within porphyrin-containing compound metabolism; heme A biosynthesis; heme A from heme O: step 1/1. Its function is as follows. Catalyzes the conversion of heme O to heme A by two successive hydroxylations of the methyl group at C8. The first hydroxylation forms heme I, the second hydroxylation results in an unstable dihydroxymethyl group, which spontaneously dehydrates, resulting in the formyl group of heme A. The sequence is that of Heme A synthase from Jannaschia sp. (strain CCS1).